The sequence spans 231 residues: Large ribosomal subunit protein uL1 (231 aa).

Belongs to the universal ribosomal protein uL1 family. Part of the 50S ribosomal subunit.

Its function is as follows. Binds directly to 23S rRNA. The L1 stalk is quite mobile in the ribosome, and is involved in E site tRNA release. In terms of biological role, protein L1 is also a translational repressor protein, it controls the translation of the L11 operon by binding to its mRNA. The polypeptide is Large ribosomal subunit protein uL1 (Acidovorax ebreus (strain TPSY) (Diaphorobacter sp. (strain TPSY))).